We begin with the raw amino-acid sequence, 637 residues long: Biosynthetic arginine decarboxylase (637 aa).

K101 bears the N6-(pyridoxal phosphate)lysine mark. 286 to 296 (FDVGGGLAVDY) contacts substrate.

The protein belongs to the Orn/Lys/Arg decarboxylase class-II family. SpeA subfamily. Mg(2+) serves as cofactor. The cofactor is pyridoxal 5'-phosphate.

The enzyme catalyses L-arginine + H(+) = agmatine + CO2. It functions in the pathway amine and polyamine biosynthesis; agmatine biosynthesis; agmatine from L-arginine: step 1/1. Functionally, catalyzes the biosynthesis of agmatine from arginine. The sequence is that of Biosynthetic arginine decarboxylase from Shewanella sp. (strain ANA-3).